The following is a 305-amino-acid chain: Glycine--tRNA ligase alpha subunit (305 aa).

Belongs to the class-II aminoacyl-tRNA synthetase family. As to quaternary structure, tetramer of two alpha and two beta subunits.

Its subcellular location is the cytoplasm. It carries out the reaction tRNA(Gly) + glycine + ATP = glycyl-tRNA(Gly) + AMP + diphosphate. This is Glycine--tRNA ligase alpha subunit from Streptococcus suis (strain 98HAH33).